We begin with the raw amino-acid sequence, 500 residues long: Protein-tyrosine sulfotransferase (500 aa).

Positions 1–24 (MQMNSVWKLSLGLLLLSSVIGSFA) are cleaved as a signal peptide. Topologically, residues 25–467 (ELDFGHCETL…SVLGEMGEEK (443 aa)) are lumenal. Residues R121 and E142 contribute to the active site. Residues N156, N248, N315, N343, N359, and N395 are each glycosylated (N-linked (GlcNAc...) asparagine). A helical membrane pass occupies residues 468–488 (LWKFVPVALMLLLIVLFFLFV). Residues 489-500 (NAKRRRTSKVKI) lie on the Cytoplasmic side of the membrane.

As to expression, expressed throughout the plant body, highest levels of expression are in the root apical meristem.

It localises to the golgi apparatus membrane. The catalysed reaction is L-tyrosyl-[protein] + 3'-phosphoadenylyl sulfate = O-sulfo-L-tyrosine-[protein] + adenosine 3',5'-bisphosphate + H(+). Functionally, catalyzes the O-sulfation of tyrosine residues within acidic motifs of polypeptides. In Arabidopsis thaliana (Mouse-ear cress), this protein is Protein-tyrosine sulfotransferase (TPST).